The following is a 58-amino-acid chain: Large ribosomal subunit protein uL30 (58 aa).

It belongs to the universal ribosomal protein uL30 family. Part of the 50S ribosomal subunit.

The sequence is that of Large ribosomal subunit protein uL30 from Desulfovibrio desulfuricans (strain ATCC 27774 / DSM 6949 / MB).